The sequence spans 88 residues: Small ribosomal subunit protein uS17 (88 aa).

Belongs to the universal ribosomal protein uS17 family. Part of the 30S ribosomal subunit.

In terms of biological role, one of the primary rRNA binding proteins, it binds specifically to the 5'-end of 16S ribosomal RNA. The sequence is that of Small ribosomal subunit protein uS17 from Oleidesulfovibrio alaskensis (strain ATCC BAA-1058 / DSM 17464 / G20) (Desulfovibrio alaskensis).